Reading from the N-terminus, the 134-residue chain is Thioredoxin-like protein Clot (134 aa).

Residues 1–134 (MTLKKVDANP…LILPLLAPST (134 aa)) enclose the Thioredoxin domain. Residues C48 and C51 each act as nucleophile in the active site. A disulfide bridge connects residues C48 and C51.

The protein belongs to the thioredoxin family.

Functionally, probable thiol-disulfide oxidoreductase that may participate in various redox reactions. In Arabidopsis thaliana (Mouse-ear cress), this protein is Thioredoxin-like protein Clot.